The chain runs to 381 residues: DNA replication and repair protein RecF (381 aa).

Residue 30-37 coordinates ATP; that stretch reads GENAQGKT.

It belongs to the RecF family.

It is found in the cytoplasm. In terms of biological role, the RecF protein is involved in DNA metabolism; it is required for DNA replication and normal SOS inducibility. RecF binds preferentially to single-stranded, linear DNA. It also seems to bind ATP. This Lactobacillus delbrueckii subsp. bulgaricus (strain ATCC 11842 / DSM 20081 / BCRC 10696 / JCM 1002 / NBRC 13953 / NCIMB 11778 / NCTC 12712 / WDCM 00102 / Lb 14) protein is DNA replication and repair protein RecF.